Reading from the N-terminus, the 200-residue chain is Potassium-transporting ATPase KdpC subunit (200 aa).

Residues P6–T26 form a helical membrane-spanning segment.

This sequence belongs to the KdpC family. In terms of assembly, the system is composed of three essential subunits: KdpA, KdpB and KdpC.

Its subcellular location is the cell inner membrane. In terms of biological role, part of the high-affinity ATP-driven potassium transport (or Kdp) system, which catalyzes the hydrolysis of ATP coupled with the electrogenic transport of potassium into the cytoplasm. This subunit acts as a catalytic chaperone that increases the ATP-binding affinity of the ATP-hydrolyzing subunit KdpB by the formation of a transient KdpB/KdpC/ATP ternary complex. This chain is Potassium-transporting ATPase KdpC subunit, found in Yersinia pseudotuberculosis serotype O:1b (strain IP 31758).